The following is a 349-amino-acid chain: Farnesyl pyrophosphate synthase vrtD (349 aa).

Isopentenyl diphosphate-binding residues include K53, R56, and Q92. Residues D99 and D103 each coordinate Mg(2+). A dimethylallyl diphosphate-binding site is contributed by R108. Residue R109 participates in isopentenyl diphosphate binding. Dimethylallyl diphosphate is bound by residues K196, T197, Q236, K253, and K262.

This sequence belongs to the FPP/GGPP synthase family. Mg(2+) serves as cofactor.

The enzyme catalyses isopentenyl diphosphate + dimethylallyl diphosphate = (2E)-geranyl diphosphate + diphosphate. It carries out the reaction isopentenyl diphosphate + (2E)-geranyl diphosphate = (2E,6E)-farnesyl diphosphate + diphosphate. It functions in the pathway secondary metabolite biosynthesis; terpenoid biosynthesis. Its function is as follows. Farnesyl pyrophosphate synthase; part of the gene cluster that mediates the biosynthesis of viridicatumtoxin, a tetracycline-like fungal meroterpenoid with a unique, fused spirobicyclic ring system. The first step of the pathway is the production of the malonamoyl-CoA starter unit for the polyketide synthase vrtA. The aldolase vrtJ may be involved in the synthesis of the malonamate substrate for malonamoyl-CoA synthetase vrtB. The polyketide synthase vrtA then may utilize the malonamoyl-CoA starter unit, followed by sequential condensation of eight malonyl-CoA units to form the polyketide backbone. The cyclization of the last ring could be mediated by the lactamase-like protein vrtG. The proposed post-PKS tailoring steps are a hydroxylation at C5 catalyzed the cytochrome P450 monooxygenase vrtE, a hydroxylation at C12a catalyzed by VrtH and/or VrtI, and an O-methylation by the O-methyltransferase vrtF. VrtC is then proposed to catalyze the transfer of a geranyl group synthesized by vrtD to the aromatic C ring of the tetracyclic polyketide intermediate of viridicatumtoxin to yield previridicatumtoxin. Finally, the cytochrome P450 monooxygenase vrtK catalyzes the spirocyclization of the geranyl moiety of previridicatumtoxin to afford viridicatumtoxin. This Penicillium aethiopicum protein is Farnesyl pyrophosphate synthase vrtD.